We begin with the raw amino-acid sequence, 212 residues long: Pyridoxine/pyridoxamine 5'-phosphate oxidase (212 aa).

Residues 8–11 (RREY) and Lys66 each bind substrate. FMN is bound by residues 61–66 (RIVLLK), 76–77 (FT), Arg82, Lys83, and Gln105. Tyr123, Arg127, and Ser131 together coordinate substrate. FMN-binding positions include 140–141 (QS) and Trp185. 191-193 (RLH) lines the substrate pocket. Arg195 is an FMN binding site.

The protein belongs to the pyridoxamine 5'-phosphate oxidase family. Homodimer. FMN is required as a cofactor.

The catalysed reaction is pyridoxamine 5'-phosphate + O2 + H2O = pyridoxal 5'-phosphate + H2O2 + NH4(+). It carries out the reaction pyridoxine 5'-phosphate + O2 = pyridoxal 5'-phosphate + H2O2. The protein operates within cofactor metabolism; pyridoxal 5'-phosphate salvage; pyridoxal 5'-phosphate from pyridoxamine 5'-phosphate: step 1/1. Its pathway is cofactor metabolism; pyridoxal 5'-phosphate salvage; pyridoxal 5'-phosphate from pyridoxine 5'-phosphate: step 1/1. Its function is as follows. Catalyzes the oxidation of either pyridoxine 5'-phosphate (PNP) or pyridoxamine 5'-phosphate (PMP) into pyridoxal 5'-phosphate (PLP). The chain is Pyridoxine/pyridoxamine 5'-phosphate oxidase from Shewanella sp. (strain MR-4).